A 468-amino-acid chain; its full sequence is Argininosuccinate lyase (468 aa).

The protein belongs to the lyase 1 family. Argininosuccinate lyase subfamily.

Its subcellular location is the cytoplasm. It catalyses the reaction 2-(N(omega)-L-arginino)succinate = fumarate + L-arginine. The protein operates within amino-acid biosynthesis; L-arginine biosynthesis; L-arginine from L-ornithine and carbamoyl phosphate: step 3/3. This Alkalilimnicola ehrlichii (strain ATCC BAA-1101 / DSM 17681 / MLHE-1) protein is Argininosuccinate lyase.